The sequence spans 1001 residues: E3 ubiquitin-protein ligase BRE1B (1001 aa).

Positions 1–31 are disordered; it reads MSGLGNKRAAGDGGSGPPEKKLSREEKTTTT. Over residues 18-28 the composition is skewed to basic and acidic residues; sequence PEKKLSREEKT. Lys20 carries the N6-acetyllysine modification. A Phosphoserine modification is found at Ser42. Residues 45 to 91 are a coiled coil; the sequence is EEIDLKVLQFKNKKLAERLEQRQACEDELRERIEKLEKRQATDDATL. The tract at residues 116–149 is disordered; sequence GELSSAPEAPGTQEGPTCDGTPLPEPGTSELREP. Coiled coils occupy residues 228–377 and 437–523; these read ARTR…LRSL and LQKK…AQTS. Residues Lys355 and Lys517 each carry the N6-acetyllysine modification. The disordered stretch occupies residues 516-646; it reads GKLRAQTSGS…EKAKVEEAKR (131 aa). Residues 520–531 show a composition bias toward polar residues; that stretch reads AQTSGSTHSTPN. Ser528 is modified (phosphoserine). Glycyl lysine isopeptide (Lys-Gly) (interchain with G-Cter in SUMO2) cross-links involve residues Lys578 and Lys579. Ser585 carries the post-translational modification Phosphoserine. Basic and acidic residues-rich tracts occupy residues 602–619 and 633–646; these read RGRE…EREG and RADR…EAKR. Residues 627 to 946 adopt a coiled-coil conformation; the sequence is VASALSRADR…EEIKEYKARL (320 aa). The RING-type zinc finger occupies 948 to 987; the sequence is CPCCNTRKKDAVLTKCFHVFCFECVRGRYEARQRKCPKCN.

Belongs to the BRE1 family. Component of the RNF20/40 complex (also known as BRE1 complex) probably composed of 2 copies of RNF20/BRE1A and 2 copies of RNF40/BRE1B. Interacts with UBE2E1/UBCH6. Interacts with RB1 and WAC.

It is found in the nucleus. The catalysed reaction is S-ubiquitinyl-[E2 ubiquitin-conjugating enzyme]-L-cysteine + [acceptor protein]-L-lysine = [E2 ubiquitin-conjugating enzyme]-L-cysteine + N(6)-ubiquitinyl-[acceptor protein]-L-lysine.. It participates in protein modification; protein ubiquitination. Functionally, component of the RNF20/40 E3 ubiquitin-protein ligase complex that mediates monoubiquitination of 'Lys-120' of histone H2B (H2BK120ub1). H2BK120ub1 gives a specific tag for epigenetic transcriptional activation and is also prerequisite for histone H3 'Lys-4' and 'Lys-79' methylation (H3K4me and H3K79me, respectively). It thereby plays a central role in histone code and gene regulation. The RNF20/40 complex forms a H2B ubiquitin ligase complex in cooperation with the E2 enzyme UBE2A or UBE2B; reports about the cooperation with UBE2E1/UBCH are contradictory. Required for transcriptional activation of Hox genes. This is E3 ubiquitin-protein ligase BRE1B (RNF40) from Macaca fascicularis (Crab-eating macaque).